The primary structure comprises 149 residues: MSFLLPKLTSKKEVDQAIKSTAEKVLVLRFGRDEDPVCLQLDDILSKTSADLSKMAAIYLVDVDHTPVYTQYFDISYIPSTVFFFNGQHMKVDYGSPDHTKFVGSFKTKQDFIDLIEVIYRGAMRGKLIVQSPIDPKNVPKYDLLYQDI.

The protein belongs to the DIM1 family. As to quaternary structure, homodimer. Interacts with the U5-102 kDa protein subunit of the spliceosome.

It is found in the nucleus. Functionally, essential role in pre-mRNA splicing. Required in cell cycle progression for S/G(2) transition. The polypeptide is Thioredoxin-like protein 4B (Txnl4b) (Mus musculus (Mouse)).